A 140-amino-acid polypeptide reads, in one-letter code: Large ribosomal subunit protein uL11 (140 aa).

The protein belongs to the universal ribosomal protein uL11 family. As to quaternary structure, part of the ribosomal stalk of the 50S ribosomal subunit. Interacts with L10 and the large rRNA to form the base of the stalk. L10 forms an elongated spine to which L12 dimers bind in a sequential fashion forming a multimeric L10(L12)X complex. One or more lysine residues are methylated.

In terms of biological role, forms part of the ribosomal stalk which helps the ribosome interact with GTP-bound translation factors. This is Large ribosomal subunit protein uL11 from Thermoanaerobacter pseudethanolicus (strain ATCC 33223 / 39E) (Clostridium thermohydrosulfuricum).